Here is a 156-residue protein sequence, read N- to C-terminus: Ribosomally synthesized cyclic peptide victorin precursosr vicA1 (156 aa).

Positions 1 to 21 (MVRITALMSGSILLFALQALA) are cleaved as a signal peptide. 7 propeptides span residues 22-36 (MPVE…AEKR), 43-55 (KRGE…EEKR), 62-74 (KRGE…EEKR), 81-93 (KRGE…EEKR), 100-112 (KRGE…EEKR), 119-131 (KRGE…EEKR), and 138-150 (KRGE…EEKR).

Post-translationally, vicA1 is processed by several endopeptidases including kexin proteases as well as the cluster-specific peptidases vicP1 and vicP2 to produce 7 identical copies of the hexapeptide Gly-Leu-Lys-Leu-Ala-Phe, that are further modified to yield victorins. After being excised from the precursor peptide, the core peptides are cyclized and modified post-translationally by enzymes encoded within the gene cluster. The ustYa family protein vicYb is required for the formation of the macrocycle in victorin and the copper amine oxidases (CAOs) vicK1 and vicK2 are responsible for converting victorin to the active form by oxidizing the N-terminal glycyl residue in the peptides to glyoxylate. Relaxed substrate specificity of enzymes in the victorin biosynthetic pathway results in a metabolic grid that produces a set of analogs including victorinines B, C, E or HV-toxin M.

Its pathway is mycotoxin biosynthesis. In terms of biological role, ribosomally synthesized cyclic peptide victorin precursor, part of the gene cluster that mediates the biosynthesis of the secondary metabolite victorin, the molecular basis for Victoria blight of oats. The vicA1 translated product contains a 7-fold repeated peptide embedding the hexapeptide Gly-Leu-Lys-Leu-Ala-Phe, that is converted into the cyclic victorin. In Bipolaris victoriae (strain FI3) (Victoria blight of oats agent), this protein is Ribosomally synthesized cyclic peptide victorin precursosr vicA1.